We begin with the raw amino-acid sequence, 58 residues long: UPF0434 protein Swoo_1821 (58 aa).

The protein belongs to the UPF0434 family.

The sequence is that of UPF0434 protein Swoo_1821 from Shewanella woodyi (strain ATCC 51908 / MS32).